The primary structure comprises 337 residues: Glyceraldehyde-3-phosphate dehydrogenase (337 aa).

NAD(+)-binding positions include 11–12 (TI) and Gly110. 139 to 141 (SCN) serves as a coordination point for D-glyceraldehyde 3-phosphate. Cys140 (nucleophile) is an active-site residue. Arg168 is a binding site for NAD(+). A D-glyceraldehyde 3-phosphate-binding site is contributed by 194 to 195 (HG). An NAD(+)-binding site is contributed by Gln301.

Belongs to the glyceraldehyde-3-phosphate dehydrogenase family. Homotetramer.

It is found in the cytoplasm. The enzyme catalyses D-glyceraldehyde 3-phosphate + phosphate + NADP(+) = (2R)-3-phospho-glyceroyl phosphate + NADPH + H(+). It catalyses the reaction D-glyceraldehyde 3-phosphate + phosphate + NAD(+) = (2R)-3-phospho-glyceroyl phosphate + NADH + H(+). It functions in the pathway carbohydrate degradation; glycolysis; pyruvate from D-glyceraldehyde 3-phosphate: step 1/5. The chain is Glyceraldehyde-3-phosphate dehydrogenase (gap) from Methanothermobacter thermautotrophicus (strain ATCC 29096 / DSM 1053 / JCM 10044 / NBRC 100330 / Delta H) (Methanobacterium thermoautotrophicum).